Consider the following 902-residue polypeptide: Chloride channel protein 2 (902 aa).

Residues 1 to 89 (MAASAAAAGE…RCHKFLVSRV (89 aa)) lie on the Cytoplasmic side of the membrane. Positions 18–36 (QYEQTLMYGRYTQELGAFA) are essential for channel gating by both voltage and cell volume. Position 22 is a phosphothreonine (T22). Residues 38-51 (EEAARIRLGGPEPW) form a modulates channel gating by both voltage and cell volume region. 2 helical membrane-spanning segments follow: residues 90 to 123 (GEDWIFLVLLGLLMALVSWAMDYAIAVCLQAQQW) and 132 to 157 (ILLQYLAWVTYPVVLITFSAGFTQIL). The Selectivity filter part_1 motif lies at 163-167 (GSGIP). Positions 166–173 (IPEMKTIL) form an intramembrane region, helical. The next 2 helical transmembrane spans lie at 182-200 (LTLKTFVAKVIGLTCALGS) and 207-225 (EGPFVHIASMCASLLSKFL). The short motif at 205 to 209 (GKEGP) is the Selectivity filter part_2 element. Intramembrane regions (helical) lie at residues 241-253 (MLAAACAVGVGCC) and 257-265 (PIGGVLFSI). Transmembrane regions (helical) follow at residues 277–297 (YWRGFFSATFSAFIFRVLAVW), 323–351 (LPAFAVIGIASGFGGALFVYLNRKIVQVM), 360–379 (FLMRKRLLFPALVTLLISTL), 431–451 (ANVFLTLVIFILMKFWMSALA), and 459–482 (GAFMPVFVIGAAFGRLVGESMAAW). The Selectivity filter part_3 motif lies at 459–463 (GAFMP). The helical intramembrane region spans 499–513 (GGYAVVGAAALAGAV). Residues 514–515 (TH) constitute an intramembrane region (note=Loop between two helices). Positions 516-527 (TVSTAVIVFELT) form an intramembrane region, helical. An intramembrane region (note=Loop between two helices) is located at residues 528 to 532 (GQIAH). A helical membrane pass occupies residues 533–550 (ILPVMIAVILANAVAQSL). The Cytoplasmic portion of the chain corresponds to 551–902 (QPSLYDSIIR…SPSDSDDKCQ (352 aa)). The CBS 1 domain maps to 586 to 644 (MVRDVPYVALNCTFRDLRLALHRTKGRMLALVESSESMILLGSIERSQVVTLLGAQLSA). The disordered stretch occupies residues 648–748 (RQHIQERRKA…TSDLEKPESC (101 aa)). 2 stretches are compositionally biased toward polar residues: residues 671 to 683 (PESSVHFQVNTED) and 706 to 719 (SNASKAGETSTGSM). Positions 794–854 (IDPAPFQLVE…GSVTAQGVKV (61 aa)) constitute a CBS 2 domain. A Basolateral membrane sorting motif is present at residues 816 to 817 (LL). The tract at residues 860-902 (SFRDSATSSSDTETTEVHALWGPHSCHGLPRDGSPSDSDDKCQ) is disordered.

Belongs to the chloride channel (TC 2.A.49) family. ClC-2/CLCN2 subfamily. Homodimer. Interacts with auxiliary subunit HEPACAM.

It is found in the cell membrane. Its subcellular location is the basolateral cell membrane. The protein resides in the cell projection. The protein localises to the dendritic spine membrane. It localises to the axon. The enzyme catalyses chloride(in) = chloride(out). It catalyses the reaction thiocyanate(in) = thiocyanate(out). It carries out the reaction bromide(in) = bromide(out). The catalysed reaction is nitrate(in) = nitrate(out). The enzyme catalyses iodide(out) = iodide(in). Its activity is regulated as follows. Common gate kinetics are down-regulated by intracellular ATP. Inhibited by AK-42, a derivative of meclofenamate. Inhibited by Cd(2+). Inhibited by Zn(2+) and PKC activation. Inhibited at acidic pH. CCLN2:HEPACAM channel conductance is up-regulated upon hypo-osmolarity. Voltage-gated and osmosensitive chloride channel. Forms a homodimeric channel where each subunit has its own ion conduction pathway. Conducts double-barreled currents controlled by two types of gates, two fast glutamate gates that control each subunit independently and a slow common gate that opens and shuts off both subunits simultaneously. Displays inward rectification currents activated upon membrane hyperpolarization and extracellular hypotonicity. Contributes to chloride conductance involved in neuron excitability. In hippocampal neurons, generates a significant part of resting membrane conductance and provides an additional chloride efflux pathway to prevent chloride accumulation in dendrites upon GABA receptor activation. In glia, associates with the auxiliary subunit HEPACAM/GlialCAM at astrocytic processes and myelinated fiber tracts where it may regulate transcellular chloride flux buffering extracellular chloride and potassium concentrations. Regulates aldosterone production in adrenal glands. The opening of CLCN2 channels at hyperpolarized membrane potentials in the glomerulosa causes cell membrane depolarization, activation of voltage-gated calcium channels and increased expression of aldosterone synthase, the rate-limiting enzyme for aldosterone biosynthesis. Contributes to chloride conductance in retinal pigment epithelium involved in phagocytosis of shed photoreceptor outer segments and photoreceptor renewal. Conducts chloride currents at the basolateral membrane of epithelial cells with a role in chloride reabsorption rather than secretion. Permeable to small monovalent anions with chloride &gt; thiocyanate &gt; bromide &gt; nitrate &gt; iodide ion selectivity. The polypeptide is Chloride channel protein 2 (CLCN2) (Cavia porcellus (Guinea pig)).